The following is a 507-amino-acid chain: WD-40 repeat-containing protein MSI4 (507 aa).

Residue Met-1 is modified to N-acetylmethionine. The interval 1 to 66 (MESDEAAAVS…KTQQSPSVDE (66 aa)) is disordered. 3 WD repeats span residues 95 to 137 (RWGP…KPRV), 162 to 202 (IHPG…NRHA), and 217 to 257 (GHQD…TTIG). A compositionally biased stretch (polar residues) spans 258–272 (TDSKSSGSIIKQTGE). The tract at residues 258–282 (TDSKSSGSIIKQTGEGTDKNESPTV) is disordered. 4 WD repeats span residues 290-330 (GHED…NPVT), 335-375 (AHDA…ANGV), 384-424 (GHKA…KKSD), and 439-486 (GHRD…YRPE). Positions 308–323 (FCSVGDDSCLILWDAR) match the DWD box motif.

This sequence belongs to the WD repeat RBAP46/RBAP48/MSI1 family. As to quaternary structure, interacts with AHL16 and HOS1. Interacts with LHP1, PDP1, PDP2 and PDP3. Component of the PRC2 (polycomb repressive complex 2) complex which regulates histone methylation on histone H3K27. In terms of tissue distribution, expressed in rosette leaves, cauline leaves, main stems and developing fruits. Expressed at higher levels in roots and flowers.

It is found in the nucleus. Functionally, core histone-binding subunit that may target chromatin assembly factors, chromatin remodeling factors and histone deacetylases to their histone substrates in a manner that is regulated by nucleosomal DNA. Component of the flowering autonomous pathway which positively regulates flowering by promoting transcriptional repression of the flowering repressor FLC. May promote histone deacetylation at the FLC locus leading to the formation of repressive chromatin structures. Forms a histone deacetylase complex with HDA5, HDA6 and FLD that represses FLC gene expression to control flowering time. Also negatively regulates cold-responsive genes. Acts together with PDP1 and MSI5 to regulate the function of the PRC2 complex on FLC. Required for systemic acquired resistance (SAR) toward pathogenic bacteria (e.g. Pseudomonas syringae pv tomato DC3000 (avrPto)). Together with FLD and MSI4/FVE, contributes to dehydroabietinal-dependent (DA, a diterpenoid tricyclic diterpene) activation of flowering ans SAR. In Arabidopsis thaliana (Mouse-ear cress), this protein is WD-40 repeat-containing protein MSI4.